A 226-amino-acid polypeptide reads, in one-letter code: Large ribosomal subunit protein uL1 (226 aa).

Belongs to the universal ribosomal protein uL1 family. In terms of assembly, part of the 50S ribosomal subunit.

Its function is as follows. Binds directly to 23S rRNA. The L1 stalk is quite mobile in the ribosome, and is involved in E site tRNA release. Protein L1 is also a translational repressor protein, it controls the translation of the L11 operon by binding to its mRNA. In Borrelia garinii subsp. bavariensis (strain ATCC BAA-2496 / DSM 23469 / PBi) (Borreliella bavariensis), this protein is Large ribosomal subunit protein uL1.